The primary structure comprises 610 residues: Membrane protein insertase YidC (610 aa).

A helical transmembrane segment spans residues 7-27 (FFITIALSILILALWQVFYLG). Residues 36–82 (QARIEEQQRQAQQAAQNRQASSSTGDTPQMPANPDSIPGQGDTKAAG) are disordered. Residues 44-55 (RQAQQAAQNRQA) are compositionally biased toward low complexity. 5 helical membrane-spanning segments follow: residues 358–378 (FDLL…FYLI), 387–407 (NFGV…FPLA), 458–478 (WPVL…YVTI), 510–530 (TVPH…TMFL), and 546–566 (IFTW…AGLV).

It belongs to the OXA1/ALB3/YidC family. Type 1 subfamily. Interacts with the Sec translocase complex via SecD. Specifically interacts with transmembrane segments of nascent integral membrane proteins during membrane integration.

It is found in the cell inner membrane. Required for the insertion and/or proper folding and/or complex formation of integral membrane proteins into the membrane. Involved in integration of membrane proteins that insert both dependently and independently of the Sec translocase complex, as well as at least some lipoproteins. Aids folding of multispanning membrane proteins. The chain is Membrane protein insertase YidC from Brucella suis biovar 1 (strain 1330).